The chain runs to 468 residues: Glutamate--tRNA ligase 2 (468 aa).

The short motif at Pro-9–Gly-19 is the 'HIGH' region element. Residues Lys-238–Arg-242 carry the 'KMSKS' region motif. Lys-241 contributes to the ATP binding site.

This sequence belongs to the class-I aminoacyl-tRNA synthetase family. Glutamate--tRNA ligase type 1 subfamily. As to quaternary structure, monomer.

The protein resides in the cytoplasm. The enzyme catalyses tRNA(Glu) + L-glutamate + ATP = L-glutamyl-tRNA(Glu) + AMP + diphosphate. Catalyzes the attachment of glutamate to tRNA(Glu) in a two-step reaction: glutamate is first activated by ATP to form Glu-AMP and then transferred to the acceptor end of tRNA(Glu). This Anaplasma phagocytophilum (strain HZ) protein is Glutamate--tRNA ligase 2.